The primary structure comprises 119 residues: Large ribosomal subunit protein bL19 (119 aa).

This sequence belongs to the bacterial ribosomal protein bL19 family.

Its function is as follows. This protein is located at the 30S-50S ribosomal subunit interface and may play a role in the structure and function of the aminoacyl-tRNA binding site. The polypeptide is Large ribosomal subunit protein bL19 (Borreliella afzelii (strain PKo) (Borrelia afzelii)).